The sequence spans 459 residues: Cysteine desulfurase (459 aa).

The transit peptide at 1-17 (MVGSVAGNMLLRAAWRR) directs the protein to the mitochondrion. Ala129, Thr130, Gln237, Ser257, and His259 together coordinate pyridoxal 5'-phosphate. Lys260 is subject to N6-(pyridoxal phosphate)lysine. Thr297 contributes to the pyridoxal 5'-phosphate binding site. Residue Cys383 is the Cysteine persulfide intermediate of the active site. Cys383 serves as a coordination point for [2Fe-2S] cluster. Cys383 is a binding site for Zn(2+). Cys383 is modified (cysteine persulfide).

It belongs to the class-V pyridoxal-phosphate-dependent aminotransferase family. NifS/IscS subfamily. Homodimer. Component of the mitochondrial core iron-sulfur cluster (ISC) complex composed of NFS1, LYRM4, NDUFAB1, ISCU, FXN, and FDX2; this complex is a heterohexamer containing two copies of each monomer. Component of cyteine desulfurase complex composed of NFS1, LYRM4 and NDUFAB1; this complex contributes to the activation of cysteine desulfurase activity and NFS1 stabilization. Interacts (homodimer form) with ISCU (D-state); each monomer interacts with the C-terminal regions of each NFS1 monomer. Interacts with HSPA9. Interacts (via homodimer form) with FDX2. Interacts (via homodimer form) with FXN. Interacts with LYRM4. Component of a complex composed of FXN, NFS1, LYRM4 and ISCU. Requires pyridoxal 5'-phosphate as cofactor. N-gluconoylated. Post-translationally, cysteine persulfide intermediate is reduced by thiol-containing molecules like glutathione and L-cysteine. Persulfide reduction is a rate-limiting step of cysteine desulfurase catalytic cycle. In terms of tissue distribution, ubiquitous.

It is found in the mitochondrion. It catalyses the reaction (sulfur carrier)-H + L-cysteine = (sulfur carrier)-SH + L-alanine. The enzyme catalyses L-cysteinyl-[cysteine desulfurase] + L-cysteine = S-sulfanyl-L-cysteinyl-[cysteine desulfurase] + L-alanine. Active only in complex with LYRM4. Functionally, mitochondrial cysteine desulfurase, of the core iron-sulfur cluster (ISC) assembly complex, that catalyzes the desulfuration of L-cysteine to L-alanine, as component of the cysteine desulfurase complex, leading to the formation of a cysteine persulfide intermediate at the active site cysteine residue and participates in the [2Fe-2S] clusters assembly on the scaffolding protein ISCU. The persulfide is then transferred on the flexible Cys loop from the catalytic site of NFS1 to the surface of NFS1. After the NFS1-linked persulfide sulfur is transferred to one of the conserved Cys residues of the scaffold, a reaction assisted by FXN. The core iron-sulfur cluster (ISC) assembly complex is involved in the de novo synthesis of a [2Fe-2S] cluster, the first step of the mitochondrial iron-sulfur protein biogenesis. This process is initiated by the cysteine desulfurase complex (NFS1:LYRM4:NDUFAB1) that produces persulfide which is delivered on the scaffold protein ISCU in a FXN-dependent manner. Then this complex is stabilized by FDX2 which provides reducing equivalents to accomplish the [2Fe-2S] cluster assembly. Finally, the [2Fe-2S] cluster is transferred from ISCU to chaperone proteins, including HSCB, HSPA9 and GLRX5. In Mus musculus (Mouse), this protein is Cysteine desulfurase.